A 173-amino-acid polypeptide reads, in one-letter code: Cell division protein SepF (173 aa).

The tract at residues 17-85 (SDDEYISDET…NELRTITTVH (69 aa)) is disordered. The segment covering 35–52 (SAGGSSAAVSESGSTSVA) has biased composition (low complexity).

Belongs to the SepF family. As to quaternary structure, homodimer. Interacts with FtsZ.

The protein resides in the cytoplasm. Its function is as follows. Cell division protein that is part of the divisome complex and is recruited early to the Z-ring. Probably stimulates Z-ring formation, perhaps through the cross-linking of FtsZ protofilaments. Its function overlaps with FtsA. The protein is Cell division protein SepF of Kocuria rhizophila (strain ATCC 9341 / DSM 348 / NBRC 103217 / DC2201).